A 152-amino-acid polypeptide reads, in one-letter code: MELPAVNLKVILLGHWLLTTWGCIVFSGSYAWANFTILALGVWAVAQRDSIDAISMFLGGLLATIFLDIVHISIFYPRAGLTDTGRFGAGMAILSLLLKPLSCCFVYHMYRQRGGFLGSSQDRSAYQTIDSAEAPANAFAVPEGRGQDARGY.

The Extracellular portion of the chain corresponds to 1–23 (MELPAVNLKVILLGHWLLTTWGC). Residues 24–44 (IVFSGSYAWANFTILALGVWA) form a helical membrane-spanning segment. Residues 45-55 (VAQRDSIDAIS) lie on the Cytoplasmic side of the membrane. The helical transmembrane segment at 56–76 (MFLGGLLATIFLDIVHISIFY) threads the bilayer. Topologically, residues 77–86 (PRAGLTDTGR) are extracellular. Residues 87–107 (FGAGMAILSLLLKPLSCCFVY) form a helical membrane-spanning segment. Topologically, residues 108 to 152 (HMYRQRGGFLGSSQDRSAYQTIDSAEAPANAFAVPEGRGQDARGY) are cytoplasmic. Phosphoserine is present on residues Ser-119 and Ser-120. Phosphothreonine is present on Thr-128. The residue at position 131 (Ser-131) is a Phosphoserine.

In terms of assembly, interacts with RACK1, and with the carboxy-terminal region of AGTR1.

Its subcellular location is the endoplasmic reticulum membrane. The protein resides in the golgi apparatus membrane. It is found in the cytoplasmic vesicle membrane. Appears to be a negative regulator of type-1 angiotensin II receptor-mediated signaling by regulating receptor internalization as well as mechanism of receptor desensitization such as phosphorylation. Also induces a decrease in cell proliferation and angiotensin II-stimulated transcriptional activity. The protein is Type-1 angiotensin II receptor-associated protein (AGTRAP) of Pongo abelii (Sumatran orangutan).